We begin with the raw amino-acid sequence, 255 residues long: Adenosine 5'-phosphosulfate reductase (255 aa).

The interval 1 to 39 is disordered; that stretch reads MMTAEVRTPEQGGGPLTTEPRAPRSAPGHADASAPAFGP. Positions 137, 138, 220, and 223 each coordinate [4Fe-4S] cluster. The active-site Nucleophile; cysteine thiosulfonate intermediate is the C246.

This sequence belongs to the PAPS reductase family. CysH subfamily. It depends on [4Fe-4S] cluster as a cofactor.

It localises to the cytoplasm. The catalysed reaction is [thioredoxin]-disulfide + sulfite + AMP + 2 H(+) = adenosine 5'-phosphosulfate + [thioredoxin]-dithiol. Its pathway is sulfur metabolism; hydrogen sulfide biosynthesis; sulfite from sulfate. Functionally, catalyzes the formation of sulfite from adenosine 5'-phosphosulfate (APS) using thioredoxin as an electron donor. The sequence is that of Adenosine 5'-phosphosulfate reductase from Deinococcus radiodurans (strain ATCC 13939 / DSM 20539 / JCM 16871 / CCUG 27074 / LMG 4051 / NBRC 15346 / NCIMB 9279 / VKM B-1422 / R1).